A 427-amino-acid polypeptide reads, in one-letter code: 3-phosphoshikimate 1-carboxyvinyltransferase (427 aa).

3-phosphoshikimate is bound by residues lysine 20, serine 21, and arginine 25. Position 20 (lysine 20) interacts with phosphoenolpyruvate. Residues glycine 92 and arginine 120 each coordinate phosphoenolpyruvate. 3-phosphoshikimate contacts are provided by serine 166, glutamine 168, aspartate 312, and lysine 339. Glutamine 168 is a binding site for phosphoenolpyruvate. The active-site Proton acceptor is aspartate 312. The phosphoenolpyruvate site is built by arginine 343 and arginine 385.

Belongs to the EPSP synthase family. As to quaternary structure, monomer.

The protein localises to the cytoplasm. The enzyme catalyses 3-phosphoshikimate + phosphoenolpyruvate = 5-O-(1-carboxyvinyl)-3-phosphoshikimate + phosphate. It participates in metabolic intermediate biosynthesis; chorismate biosynthesis; chorismate from D-erythrose 4-phosphate and phosphoenolpyruvate: step 6/7. Its function is as follows. Catalyzes the transfer of the enolpyruvyl moiety of phosphoenolpyruvate (PEP) to the 5-hydroxyl of shikimate-3-phosphate (S3P) to produce enolpyruvyl shikimate-3-phosphate and inorganic phosphate. The sequence is that of 3-phosphoshikimate 1-carboxyvinyltransferase from Streptococcus sanguinis (strain SK36).